The sequence spans 200 residues: Cation channel sperm-associated auxiliary subunit zeta (200 aa).

Positions 1–29 (MEEKPSKVSLKSSDRQGSDEESVHSDTRD) are enriched in basic and acidic residues. 2 disordered regions span residues 1–31 (MEEK…RDLW) and 58–78 (NISK…EGYK).

As to quaternary structure, component of the CatSper complex or CatSpermasome composed of the core pore-forming members CATSPER1, CATSPER2, CATSPER3 and CATSPER4 as well as auxiliary members CATSPERB, CATSPERG, CATSPERD, CATSPERE, CATSPERZ, C2CD6/CATSPERT, TMEM249, TMEM262 and EFCAB9. HSPA1 may be an additional auxiliary complex member. The core complex members CATSPER1, CATSPER2, CATSPER3 and CATSPER4 form a heterotetrameric channel. The auxiliary CATSPERB, CATSPERG, CATSPERD and CATSPERE subunits form a pavilion-like structure over the pore which stabilizes the complex through interactions with CATSPER4, CATSPER3, CATSPER1 and CATSPER2 respectively. TMEM262/CATSPERH interacts with CATSPERB, further stabilizing the complex. C2CD6/CATSPERT interacts at least with CATSPERD and is required for targeting the CatSper complex in the flagellar membrane. Interacts with EFCAB9; the interaction is direct, Ca(2+)-dependent and connects EFCAB9 with the CatSper complex. Dissociates from EFCAB9 at elevated pH.

The protein resides in the cell projection. It is found in the cilium. It localises to the flagellum membrane. Its function is as follows. Auxiliary component of the CatSper complex, a complex involved in sperm cell hyperactivation. Sperm cell hyperactivation is needed for sperm motility which is essential late in the preparation of sperm for fertilization. Required for a distribution of the CatSper complex in linear quadrilateral nanodomains along the flagellum, maximizing fertilization inside the mammalian female reproductive tract. Together with EFCAB9, associates with the CatSper channel pore and is required for the two-row structure of each single CatSper channel. In Homo sapiens (Human), this protein is Cation channel sperm-associated auxiliary subunit zeta.